The sequence spans 54 residues: Large ribosomal subunit protein bL33A (54 aa).

This sequence belongs to the bacterial ribosomal protein bL33 family.

The protein is Large ribosomal subunit protein bL33A of Mycobacteroides abscessus (strain ATCC 19977 / DSM 44196 / CCUG 20993 / CIP 104536 / JCM 13569 / NCTC 13031 / TMC 1543 / L948) (Mycobacterium abscessus).